A 98-amino-acid chain; its full sequence is Integration host factor subunit alpha (98 aa).

A disordered region spans residues 49 to 71; that stretch reads FGNFDLRDKNQRPGRNPKTGEDI.

It belongs to the bacterial histone-like protein family. In terms of assembly, heterodimer of an alpha and a beta chain.

Its function is as follows. This protein is one of the two subunits of integration host factor, a specific DNA-binding protein that functions in genetic recombination as well as in transcriptional and translational control. The polypeptide is Integration host factor subunit alpha (Edwardsiella ictaluri (strain 93-146)).